A 578-amino-acid polypeptide reads, in one-letter code: 15-cis-phytoene desaturase, chloroplastic/chromoplastic (578 aa).

The transit peptide at 1–87 (MDTGCLSSMN…PLENTINFLE (87 aa)) directs the protein to the chloroplast and chromoplast. Residues A115, 134–135 (EA), K142, 159–160 (HI), and Y165 contribute to the FAD site. R300 lines the substrate pocket. FAD contacts are provided by I342 and D531. Residue A539 coordinates substrate. M541 serves as a coordination point for FAD.

Belongs to the carotenoid/retinoid oxidoreductase family. As to quaternary structure, homotetramer. Homotetramer is the active form of the enzyme. FAD is required as a cofactor.

It localises to the plastid. It is found in the chloroplast. The protein localises to the chromoplast. The protein resides in the membrane. It carries out the reaction 2 a plastoquinone + 15-cis-phytoene = 9,9',15-tri-cis-zeta-carotene + 2 a plastoquinol. The protein operates within carotenoid biosynthesis; lycopene biosynthesis. With respect to regulation, inhibited by the herbicide norflurazon (NFZ). Functionally, converts phytoene into zeta-carotene via the intermediary of phytofluene by the symmetrical introduction of two double bonds at the C-11 and C-11' positions of phytoene with a concomitant isomerization of two neighboring double bonds at the C9 and C9' positions from trans to cis. Active with decylplastoquinone (DPQ) as substrate. Also active with other benzoquinones, which are strongly preferred over naphthoquinones as substrates. The polypeptide is 15-cis-phytoene desaturase, chloroplastic/chromoplastic (PDS1) (Oryza sativa subsp. indica (Rice)).